The primary structure comprises 246 residues: 1-(5-phosphoribosyl)-5-[(5-phosphoribosylamino)methylideneamino] imidazole-4-carboxamide isomerase (246 aa).

The active-site Proton acceptor is D8. D131 serves as the catalytic Proton donor.

This sequence belongs to the HisA/HisF family.

It localises to the cytoplasm. It carries out the reaction 1-(5-phospho-beta-D-ribosyl)-5-[(5-phospho-beta-D-ribosylamino)methylideneamino]imidazole-4-carboxamide = 5-[(5-phospho-1-deoxy-D-ribulos-1-ylimino)methylamino]-1-(5-phospho-beta-D-ribosyl)imidazole-4-carboxamide. The protein operates within amino-acid biosynthesis; L-histidine biosynthesis; L-histidine from 5-phospho-alpha-D-ribose 1-diphosphate: step 4/9. The sequence is that of 1-(5-phosphoribosyl)-5-[(5-phosphoribosylamino)methylideneamino] imidazole-4-carboxamide isomerase from Lactococcus lactis subsp. cremoris (strain MG1363).